A 138-amino-acid polypeptide reads, in one-letter code: Large ribosomal subunit protein uL16 (138 aa).

The segment covering 1-16 (MLIPRKVAHRKQHHPG) has biased composition (basic residues). A disordered region spans residues 1-24 (MLIPRKVAHRKQHHPGRTGAAKGG).

It belongs to the universal ribosomal protein uL16 family. Part of the 50S ribosomal subunit.

Binds 23S rRNA and is also seen to make contacts with the A and possibly P site tRNAs. The chain is Large ribosomal subunit protein uL16 from Frankia alni (strain DSM 45986 / CECT 9034 / ACN14a).